The chain runs to 215 residues: Probable phosphoglycerate mutase GpmB (215 aa).

Residues 8–15 (RHGETQWN), 21–22 (QG), Arg-58, 82–85 (ELDM), 104–105 (RR), and 151–152 (GM) contribute to the substrate site. The active-site Tele-phosphohistidine intermediate is the His-9. Catalysis depends on Glu-82, which acts as the Proton donor/acceptor.

Belongs to the phosphoglycerate mutase family. GpmB subfamily.

It carries out the reaction (2R)-2-phosphoglycerate = (2R)-3-phosphoglycerate. The protein operates within carbohydrate degradation; glycolysis; pyruvate from D-glyceraldehyde 3-phosphate: step 3/5. The sequence is that of Probable phosphoglycerate mutase GpmB from Cronobacter sakazakii (strain ATCC BAA-894) (Enterobacter sakazakii).